The following is a 326-amino-acid chain: MSANLKYLSLGILVFQTTSLVLTMRYSRTLKEEGPRYLSSTAVVVAEFLKIMACIFLVYKDSKCSVRTLNRVLHDEILNKPMETLKLAIPSGIYTLQNNLLYVALSNLDAATYQVTYQLKILTTALFSVSMLGKKLGMYQWLSLVILMAGVAFVQWPSDSQELNSKDLSTGSQFVGLMAVLIACFSSGFAGVYFEKILKETKQSVWIRNIQLGFFGSIFGLMGVYVYDGELVSKNGFFQGYNQLTWIVVVLQALGGLVIAAVIKYADNILKGFATSLSIILSTIISYFWLQDFVPTSVFFLGAILVIAATFLYGYDPKPAGNPTKA.

8 helical membrane-spanning segments follow: residues 4–24, 38–58, 136–156, 174–194, 212–232, 243–263, 269–289, and 293–313; these read NLKY…VLTM, LSST…IFLV, LGMY…FVQW, FVGL…GVYF, LGFF…GELV, QLTW…AAVI, ILKG…SYFW, and FVPT…TFLY.

This sequence belongs to the nucleotide-sugar transporter family. SLC35A subfamily. As to quaternary structure, interacts with SLC35A2; the interaction is reduced in the presence of SLC35A4. Found in a complex with SLC35A2 and SLC35A4. Interacts with MGAT4B. In terms of processing, O-Glcnacylation regulates the stability of SLC35A3 and the specific complex formation with MGAT4B.

The protein localises to the golgi apparatus membrane. The enzyme catalyses UMP(out) + UDP-N-acetyl-alpha-D-glucosamine(in) = UMP(in) + UDP-N-acetyl-alpha-D-glucosamine(out). Functionally, transports diphosphate-N-acetylglucosamine (UDP-GlcNAc) from the cytosol into the lumen of the Golgi apparatus, functioning as an antiporter that exchanges UDP-N-acetyl-alpha-D-glucosamine for UMP. May supply UDP-GlcNAc as substrate for Golgi-resident glycosyltransferases that generate highly branched, multiantennary complex N-glycans and keratan sulfate. However, the exact role of SLC35A3 still needs to be elucidated, it could be a member of a catalytically more efficient multiprotein complex rather than function independently as a single transporter. The sequence is that of UDP-N-acetylglucosamine transporter (Slc35a3) from Rattus norvegicus (Rat).